The following is a 603-amino-acid chain: UvrABC system protein C (603 aa).

The region spanning 15 to 92 (DQPGCYLMKD…IKKHDPRFNI (78 aa)) is the GIY-YIG domain. The UVR domain occupies 197–232 (KTVKNDLMKKMQEAAENMEFEKAGEFRDQINAIETT).

It belongs to the UvrC family. Interacts with UvrB in an incision complex.

The protein localises to the cytoplasm. Its function is as follows. The UvrABC repair system catalyzes the recognition and processing of DNA lesions. UvrC both incises the 5' and 3' sides of the lesion. The N-terminal half is responsible for the 3' incision and the C-terminal half is responsible for the 5' incision. The polypeptide is UvrABC system protein C (Listeria monocytogenes serovar 1/2a (strain ATCC BAA-679 / EGD-e)).